Consider the following 482-residue polypeptide: Programmed cell death protein 7 (482 aa).

2 disordered regions span residues 1–136 (MALP…GDAA) and 151–170 (GNPR…GPSL). A compositionally biased stretch (pro residues) spans 13-48 (GPPPPQPPPSAPFGCPPPPLPSPAFPPPLPQRPGPF). The span at 49–71 (PGASAPFLQPPLALQPRAPAEAS) shows a compositional bias: low complexity. Pro residues-rich tracts occupy residues 82–100 (PVPP…PFPG) and 109–130 (PPPP…PPPD). Over residues 151-168 (GNPRRPGGLRTPRTPAGP) the composition is skewed to low complexity. Residues 233-408 (EARRRLERVR…LQKREIESKL (176 aa)) adopt a coiled-coil conformation.

In terms of assembly, interacts with RBM40. Component of the U11/U12 snRNPs that are part of the U12-type spliceosome. As to expression, highly expressed in testis, thymus and lymph nodes. Detected at low levels in embryonic stem cells.

The protein localises to the nucleus. In terms of biological role, promotes apoptosis when overexpressed. In Mus musculus (Mouse), this protein is Programmed cell death protein 7 (Pdcd7).